The primary structure comprises 114 residues: DNA-directed RNA polymerase subunit omega (114 aa).

It belongs to the RNA polymerase subunit omega family. The RNAP catalytic core consists of 2 alpha, 1 beta, 1 beta' and 1 omega subunit. When a sigma factor is associated with the core the holoenzyme is formed, which can initiate transcription.

The enzyme catalyses RNA(n) + a ribonucleoside 5'-triphosphate = RNA(n+1) + diphosphate. Its function is as follows. Promotes RNA polymerase assembly. Latches the N- and C-terminal regions of the beta' subunit thereby facilitating its interaction with the beta and alpha subunits. The protein is DNA-directed RNA polymerase subunit omega of Novosphingobium aromaticivorans (strain ATCC 700278 / DSM 12444 / CCUG 56034 / CIP 105152 / NBRC 16084 / F199).